We begin with the raw amino-acid sequence, 72 residues long: Translation initiation factor IF-1 (72 aa).

The S1-like domain maps to 1–72 (MAKEGAIEVE…TRGRIVYRYK (72 aa)).

Belongs to the IF-1 family. As to quaternary structure, component of the 30S ribosomal translation pre-initiation complex which assembles on the 30S ribosome in the order IF-2 and IF-3, IF-1 and N-formylmethionyl-tRNA(fMet); mRNA recruitment can occur at any time during PIC assembly.

The protein resides in the cytoplasm. One of the essential components for the initiation of protein synthesis. Stabilizes the binding of IF-2 and IF-3 on the 30S subunit to which N-formylmethionyl-tRNA(fMet) subsequently binds. Helps modulate mRNA selection, yielding the 30S pre-initiation complex (PIC). Upon addition of the 50S ribosomal subunit IF-1, IF-2 and IF-3 are released leaving the mature 70S translation initiation complex. The chain is Translation initiation factor IF-1 from Corynebacterium glutamicum (strain R).